Here is a 239-residue protein sequence, read N- to C-terminus: Geranylgeranylglyceryl phosphate synthase (239 aa).

Position 13 (Lys-13) interacts with sn-glycerol 1-phosphate. Mg(2+)-binding residues include Asp-15 and Thr-42. Residues 162-167 (YIEYSG), Gly-192, and 212-213 (GD) each bind sn-glycerol 1-phosphate.

It belongs to the GGGP/HepGP synthase family. Group I subfamily. The cofactor is Mg(2+).

Its subcellular location is the cytoplasm. It carries out the reaction sn-glycerol 1-phosphate + (2E,6E,10E)-geranylgeranyl diphosphate = sn-3-O-(geranylgeranyl)glycerol 1-phosphate + diphosphate. It participates in membrane lipid metabolism; glycerophospholipid metabolism. In terms of biological role, prenyltransferase that catalyzes the transfer of the geranylgeranyl moiety of geranylgeranyl diphosphate (GGPP) to the C3 hydroxyl of sn-glycerol-1-phosphate (G1P). This reaction is the first ether-bond-formation step in the biosynthesis of archaeal membrane lipids. The sequence is that of Geranylgeranylglyceryl phosphate synthase from Haloquadratum walsbyi (strain DSM 16790 / HBSQ001).